Here is a 547-residue protein sequence, read N- to C-terminus: Chaperonin GroEL (547 aa).

Residues 30–33 (TLGP), K51, 87–91 (DGTTT), G415, and D496 contribute to the ATP site. The tract at residues 525-547 (KPEPKSPAGGPGMGGMGGMDGMM) is disordered. The span at 533–547 (GGPGMGGMGGMDGMM) shows a compositional bias: gly residues.

The protein belongs to the chaperonin (HSP60) family. Forms a cylinder of 14 subunits composed of two heptameric rings stacked back-to-back. Interacts with the co-chaperonin GroES.

The protein resides in the cytoplasm. It carries out the reaction ATP + H2O + a folded polypeptide = ADP + phosphate + an unfolded polypeptide.. In terms of biological role, together with its co-chaperonin GroES, plays an essential role in assisting protein folding. The GroEL-GroES system forms a nano-cage that allows encapsulation of the non-native substrate proteins and provides a physical environment optimized to promote and accelerate protein folding. This chain is Chaperonin GroEL, found in Cereibacter sphaeroides (strain ATCC 17029 / ATH 2.4.9) (Rhodobacter sphaeroides).